Here is a 959-residue protein sequence, read N- to C-terminus: Glycine dehydrogenase (decarboxylating) (959 aa).

N6-(pyridoxal phosphate)lysine is present on lysine 704.

This sequence belongs to the GcvP family. In terms of assembly, the glycine cleavage system is composed of four proteins: P, T, L and H. Pyridoxal 5'-phosphate is required as a cofactor.

It catalyses the reaction N(6)-[(R)-lipoyl]-L-lysyl-[glycine-cleavage complex H protein] + glycine + H(+) = N(6)-[(R)-S(8)-aminomethyldihydrolipoyl]-L-lysyl-[glycine-cleavage complex H protein] + CO2. The glycine cleavage system catalyzes the degradation of glycine. The P protein binds the alpha-amino group of glycine through its pyridoxal phosphate cofactor; CO(2) is released and the remaining methylamine moiety is then transferred to the lipoamide cofactor of the H protein. In Parasynechococcus marenigrum (strain WH8102), this protein is Glycine dehydrogenase (decarboxylating).